The following is a 221-amino-acid chain: Lipoprotein-releasing system ATP-binding protein LolD (221 aa).

Positions 8 to 220 constitute an ABC transporter domain; the sequence is LKMISKHYKQ…YNLKHGLLNI (213 aa). 42-49 provides a ligand contact to ATP; sequence GSSGSGKS.

This sequence belongs to the ABC transporter superfamily. Lipoprotein translocase (TC 3.A.1.125) family. The complex is composed of two ATP-binding proteins (LolD) and two transmembrane proteins (LolC and LolE).

The protein resides in the cell inner membrane. In terms of biological role, part of the ABC transporter complex LolCDE involved in the translocation of mature outer membrane-directed lipoproteins, from the inner membrane to the periplasmic chaperone, LolA. Responsible for the formation of the LolA-lipoprotein complex in an ATP-dependent manner. In Rickettsia prowazekii (strain Madrid E), this protein is Lipoprotein-releasing system ATP-binding protein LolD.